The sequence spans 336 residues: NADH-quinone oxidoreductase subunit H (336 aa).

8 consecutive transmembrane segments (helical) span residues 4-24, 75-95, 108-128, 154-174, 181-201, 233-253, 272-292, and 308-328; these read YILW…LVVA, YLFF…WAVI, LGLL…VIAG, MGFA…TGII, LWHW…IAGI, LFFL…SIMF, FVPG…MFLW, and LGWK…ACMV.

Belongs to the complex I subunit 1 family. NDH-1 is composed of 14 different subunits. Subunits NuoA, H, J, K, L, M, N constitute the membrane sector of the complex.

Its subcellular location is the cell inner membrane. The enzyme catalyses a quinone + NADH + 5 H(+)(in) = a quinol + NAD(+) + 4 H(+)(out). Its function is as follows. NDH-1 shuttles electrons from NADH, via FMN and iron-sulfur (Fe-S) centers, to quinones in the respiratory chain. The immediate electron acceptor for the enzyme in this species is believed to be ubiquinone. Couples the redox reaction to proton translocation (for every two electrons transferred, four hydrogen ions are translocated across the cytoplasmic membrane), and thus conserves the redox energy in a proton gradient. This subunit may bind ubiquinone. In Francisella philomiragia subsp. philomiragia (strain ATCC 25017 / CCUG 19701 / FSC 153 / O#319-036), this protein is NADH-quinone oxidoreductase subunit H.